The primary structure comprises 225 residues: PKHD-type hydroxylase YbiX (225 aa).

One can recognise a Fe2OG dioxygenase domain in the interval 78–177 (TLSTPLFNRY…RVASFMWIQS (100 aa)). Residues histidine 96, aspartate 98, and histidine 158 each contribute to the Fe cation site. Residue arginine 168 coordinates 2-oxoglutarate.

It depends on Fe(2+) as a cofactor. Requires L-ascorbate as cofactor.

The sequence is that of PKHD-type hydroxylase YbiX from Shigella flexneri serotype 5b (strain 8401).